A 294-amino-acid polypeptide reads, in one-letter code: Eukaryotic translation initiation factor 3 subunit G (294 aa).

Disordered stretches follow at residues 1–43 and 160–211; these read MPSA…ENKI and EDDG…RDET. Basic and acidic residues predominate over residues 194-211; it reads GANRRGETMPSRSQRDET. The 79-residue stretch at 212–290 folds into the RRM domain; sequence ATIRVTNLSE…LILNVEWAKP (79 aa).

The protein belongs to the eIF-3 subunit G family. Component of the eukaryotic translation initiation factor 3 (eIF-3) complex.

The protein resides in the cytoplasm. Its function is as follows. RNA-binding component of the eukaryotic translation initiation factor 3 (eIF-3) complex, which is involved in protein synthesis of a specialized repertoire of mRNAs and, together with other initiation factors, stimulates binding of mRNA and methionyl-tRNAi to the 40S ribosome. The eIF-3 complex specifically targets and initiates translation of a subset of mRNAs involved in cell proliferation. This subunit can bind 18S rRNA. The polypeptide is Eukaryotic translation initiation factor 3 subunit G (Nematostella vectensis (Starlet sea anemone)).